The chain runs to 1144 residues: Alpha-mannosidase 2 (1144 aa).

Residues 1–5 lie on the Cytoplasmic side of the membrane; it reads MKLSR. Residues 6-26 form a helical; Signal-anchor for type II membrane protein membrane-spanning segment; the sequence is QFTVFGSAIFCVVIFSLYLML. The Lumenal segment spans residues 27-1144; the sequence is DRGHLDYPRN…EISTFRIQLR (1118 aa). An N-linked (GlcNAc...) asparagine glycan is attached at Asn-78. A phosphoserine mark is found at Ser-80 and Ser-82. A glycan (N-linked (GlcNAc...) asparagine) is linked at Asn-93. Positions 175, 177, 289, and 569 each coordinate Zn(2+). Asp-289 (nucleophile) is an active-site residue. An N-linked (GlcNAc...) asparagine glycan is attached at Asn-1125.

The protein belongs to the glycosyl hydrolase 38 family. As to quaternary structure, homodimer; disulfide-linked. It depends on Zn(2+) as a cofactor. Glycosylated.

The protein resides in the golgi apparatus membrane. It catalyses the reaction N(4)-{beta-D-GlcNAc-(1-&gt;2)-alpha-D-Man-(1-&gt;3)-[alpha-D-Man-(1-&gt;3)-[alpha-D-Man-(1-&gt;6)]-alpha-D-Man-(1-&gt;6)]-beta-D-Man-(1-&gt;4)-beta-D-GlcNAc-(1-&gt;4)-beta-D-GlcNAc}-L-asparaginyl-[protein] + 2 H2O = 2 alpha-D-mannopyranose + an N(4)-{beta-D-GlcNAc-(1-&gt;2)-alpha-D-Man-(1-&gt;3)-[alpha-D-Man-(1-&gt;6)]-beta-D-Man-(1-&gt;4)-beta-D-GlcNAc-(1-&gt;4)-beta-D-GlcNAc}-L-asparaginyl-[protein]. The protein operates within protein modification; protein glycosylation. Catalyzes the first committed step in the biosynthesis of complex N-glycans. It controls conversion of high mannose to complex N-glycans; the final hydrolytic step in the N-glycan maturation pathway. This is Alpha-mannosidase 2 (MAN2A1) from Homo sapiens (Human).